The following is a 233-amino-acid chain: 2,3,4,5-tetrahydropyridine-2,6-dicarboxylate N-acetyltransferase (233 aa).

Belongs to the transferase hexapeptide repeat family. DapH subfamily.

The catalysed reaction is (S)-2,3,4,5-tetrahydrodipicolinate + acetyl-CoA + H2O = L-2-acetamido-6-oxoheptanedioate + CoA. Its pathway is amino-acid biosynthesis; L-lysine biosynthesis via DAP pathway; LL-2,6-diaminopimelate from (S)-tetrahydrodipicolinate (acetylase route): step 1/3. Its function is as follows. Catalyzes the transfer of an acetyl group from acetyl-CoA to tetrahydrodipicolinate. In Petrotoga mobilis (strain DSM 10674 / SJ95), this protein is 2,3,4,5-tetrahydropyridine-2,6-dicarboxylate N-acetyltransferase.